Consider the following 376-residue polypeptide: Coatomer subunit delta-4 (376 aa).

The interval 65–92 (LNTDTDTFTSRPKGRTSGGTTGAGKGIG) is disordered. A compositionally biased stretch (gly residues) spans 80–92 (TSGGTTGAGKGIG). Residues 134 to 376 (SDPVTVAVEE…RLVADNYQVV (243 aa)) enclose the MHD domain.

This sequence belongs to the adaptor complexes medium subunit family. Delta-COP subfamily. As to quaternary structure, oligomeric complex that consists of at least the alpha, beta, beta', gamma, delta, epsilon and zeta subunits.

The protein localises to the cytoplasm. It localises to the golgi apparatus membrane. Its subcellular location is the cytoplasmic vesicle. It is found in the COPI-coated vesicle membrane. Functionally, the coatomer is a cytosolic protein complex that binds to dilysine motifs and reversibly associates with Golgi non-clathrin-coated vesicles, which further mediate biosynthetic protein transport from the ER, via the Golgi up to the trans Golgi network. Coatomer complex is required for budding from Golgi membranes, and is essential for the retrograde Golgi-to-ER transport of dilysine-tagged proteins. This chain is Coatomer subunit delta-4, found in Oryza sativa subsp. japonica (Rice).